The chain runs to 419 residues: MSHWQQITGGVTAAKGYRAAGITAGLKASGAPDLALIVSDVPAIAAGVFTTNHMCAAPVRYCRQRLQTKGTAQAILCNSGQANAATGEQGWQAVLAQADMVATALGFSPEMVLVASTGVIGQPIPLEKMRQALPTLTANLSDGGGEAAARAIMTTDLVPKQIALEAEWEGQTIRIGGMAKGSGMIHPKMATMLAFITCDAAVSPHLWQEMLQRACDRSFNQITVDGDTSTNDSVIALANGQSRTPAIAEPGAAATRLEEMLTAVCVHLAKAIARDGEGATCLIEVQVSGASDDTAARQVARTIASSMLVKSAIYGRDPNWGRIAAAAGRAGVPFDASNLAIALGGIPMMRHGQPLPFDPAAAHAYLVQQAAASTDASGQQSIDHPVVIEVSIGSGSGRGVAWGCDLSYDYVKINAEYTT.

Substrate contacts are provided by T154, K180, T191, E277, N414, and T419. T191 acts as the Nucleophile in catalysis.

This sequence belongs to the ArgJ family. As to quaternary structure, heterotetramer of two alpha and two beta chains.

The protein resides in the cytoplasm. The enzyme catalyses N(2)-acetyl-L-ornithine + L-glutamate = N-acetyl-L-glutamate + L-ornithine. The catalysed reaction is L-glutamate + acetyl-CoA = N-acetyl-L-glutamate + CoA + H(+). It functions in the pathway amino-acid biosynthesis; L-arginine biosynthesis; L-ornithine and N-acetyl-L-glutamate from L-glutamate and N(2)-acetyl-L-ornithine (cyclic): step 1/1. Its pathway is amino-acid biosynthesis; L-arginine biosynthesis; N(2)-acetyl-L-ornithine from L-glutamate: step 1/4. In terms of biological role, catalyzes two activities which are involved in the cyclic version of arginine biosynthesis: the synthesis of N-acetylglutamate from glutamate and acetyl-CoA as the acetyl donor, and of ornithine by transacetylation between N(2)-acetylornithine and glutamate. The chain is Arginine biosynthesis bifunctional protein ArgJ from Thermosynechococcus vestitus (strain NIES-2133 / IAM M-273 / BP-1).